A 250-amino-acid polypeptide reads, in one-letter code: ATP synthase subunit a (250 aa).

6 consecutive transmembrane segments (helical) span residues 29-49 (ASLF…FATS), 84-104 (FFPL…LGMF), 114-134 (IIVT…YGFY), 143-163 (VFVP…IEII), 193-213 (FVAS…LPLI), and 216-236 (VALT…FAVL).

The protein belongs to the ATPase A chain family. In terms of assembly, F-type ATPases have 2 components, CF(1) - the catalytic core - and CF(0) - the membrane proton channel. CF(1) has five subunits: alpha(3), beta(3), gamma(1), delta(1), epsilon(1). CF(0) has three main subunits: a(1), b(2) and c(9-12). The alpha and beta chains form an alternating ring which encloses part of the gamma chain. CF(1) is attached to CF(0) by a central stalk formed by the gamma and epsilon chains, while a peripheral stalk is formed by the delta and b chains.

Its subcellular location is the cell inner membrane. In terms of biological role, key component of the proton channel; it plays a direct role in the translocation of protons across the membrane. This is ATP synthase subunit a from Rhizobium leguminosarum bv. trifolii (strain WSM2304).